Reading from the N-terminus, the 76-residue chain is Exodeoxyribonuclease 7 small subunit (76 aa).

It belongs to the XseB family. As to quaternary structure, heterooligomer composed of large and small subunits.

The protein resides in the cytoplasm. The catalysed reaction is Exonucleolytic cleavage in either 5'- to 3'- or 3'- to 5'-direction to yield nucleoside 5'-phosphates.. Bidirectionally degrades single-stranded DNA into large acid-insoluble oligonucleotides, which are then degraded further into small acid-soluble oligonucleotides. This Staphylococcus haemolyticus (strain JCSC1435) protein is Exodeoxyribonuclease 7 small subunit.